Consider the following 203-residue polypeptide: Small ribosomal subunit protein uS4 (203 aa).

In terms of domain architecture, S4 RNA-binding spans 93-154 (RRLDNVVFRA…KSRNMDAVTD (62 aa)).

Belongs to the universal ribosomal protein uS4 family. In terms of assembly, part of the 30S ribosomal subunit. Contacts protein S5. The interaction surface between S4 and S5 is involved in control of translational fidelity.

Functionally, one of the primary rRNA binding proteins, it binds directly to 16S rRNA where it nucleates assembly of the body of the 30S subunit. With S5 and S12 plays an important role in translational accuracy. The sequence is that of Small ribosomal subunit protein uS4 from Chlorobium luteolum (strain DSM 273 / BCRC 81028 / 2530) (Pelodictyon luteolum).